Here is a 167-residue protein sequence, read N- to C-terminus: MALNLQDKQAIVAEVSEVAKGALSAVVADSRGVTVDKMTELRKAGREAGVYMRVVRNTLLRRVVEGTQFECLKDTLTGPTLIAYSMEHPGAAARLFKEFAKANAKFEVKAAAFEGELISAAQIDRLATLPTYDEAIARLMATMKEAAAGKLVRTLAAVRDQKEATAA.

It belongs to the universal ribosomal protein uL10 family. As to quaternary structure, part of the ribosomal stalk of the 50S ribosomal subunit. The N-terminus interacts with L11 and the large rRNA to form the base of the stalk. The C-terminus forms an elongated spine to which L12 dimers bind in a sequential fashion forming a multimeric L10(L12)X complex.

In terms of biological role, forms part of the ribosomal stalk, playing a central role in the interaction of the ribosome with GTP-bound translation factors. This is Large ribosomal subunit protein uL10 from Erwinia tasmaniensis (strain DSM 17950 / CFBP 7177 / CIP 109463 / NCPPB 4357 / Et1/99).